The sequence spans 348 residues: MSFIHKLIQKFKPKKKLVDQVQQAVQEKSFFQANQKSYYQGLNKSANSFANTINKLAANYVTVNEQFQESLFEELVLLDIGYHAATKICDAIVQELKLQRVSDPQLIQEIIVDKLIVYYIQDKLFETDLTVEANKTNVYLFVGVNGVGKTTSLAKLADQLTKQNKRVLMVAGDTFRAGAVAQLAEWAQRIGCDIVLPNPKEETPAVIFRGVQQGIQNEYDFVLCDTSGRLQNKTNLMNELKKIYQIVQKVSSAKPQETLLVLDGTTGQSGLAQAKVFNEFTELTGIILTKMDSSSKGGIILAIKDLFNLPVKLIGFGETTADLAAFDLEQYVLGLTKNLSLNHEPNQT.

GTP is bound by residues 143-150, 225-229, and 289-292; these read GVNGVGKT, DTSGR, and TKMD.

This sequence belongs to the GTP-binding SRP family. FtsY subfamily. In terms of assembly, part of the signal recognition particle protein translocation system, which is composed of SRP and FtsY.

It localises to the cell membrane. The protein localises to the cytoplasm. It catalyses the reaction GTP + H2O = GDP + phosphate + H(+). Involved in targeting and insertion of nascent membrane proteins into the cytoplasmic membrane. Acts as a receptor for the complex formed by the signal recognition particle (SRP) and the ribosome-nascent chain (RNC). The polypeptide is Signal recognition particle receptor FtsY (Mycoplasma pneumoniae (strain ATCC 29342 / M129 / Subtype 1) (Mycoplasmoides pneumoniae)).